The chain runs to 297 residues: Phosphatidylserine decarboxylase proenzyme (297 aa).

Catalysis depends on charge relay system; for autoendoproteolytic cleavage activity residues aspartate 90, histidine 147, and serine 252. Catalysis depends on serine 252, which acts as the Schiff-base intermediate with substrate; via pyruvic acid; for decarboxylase activity. Serine 252 is modified (pyruvic acid (Ser); by autocatalysis).

The protein belongs to the phosphatidylserine decarboxylase family. PSD-B subfamily. Prokaryotic type I sub-subfamily. In terms of assembly, heterodimer of a large membrane-associated beta subunit and a small pyruvoyl-containing alpha subunit. Pyruvate serves as cofactor. In terms of processing, is synthesized initially as an inactive proenzyme. Formation of the active enzyme involves a self-maturation process in which the active site pyruvoyl group is generated from an internal serine residue via an autocatalytic post-translational modification. Two non-identical subunits are generated from the proenzyme in this reaction, and the pyruvate is formed at the N-terminus of the alpha chain, which is derived from the carboxyl end of the proenzyme. The autoendoproteolytic cleavage occurs by a canonical serine protease mechanism, in which the side chain hydroxyl group of the serine supplies its oxygen atom to form the C-terminus of the beta chain, while the remainder of the serine residue undergoes an oxidative deamination to produce ammonia and the pyruvoyl prosthetic group on the alpha chain. During this reaction, the Ser that is part of the protease active site of the proenzyme becomes the pyruvoyl prosthetic group, which constitutes an essential element of the active site of the mature decarboxylase.

The protein resides in the cell membrane. It catalyses the reaction a 1,2-diacyl-sn-glycero-3-phospho-L-serine + H(+) = a 1,2-diacyl-sn-glycero-3-phosphoethanolamine + CO2. The protein operates within phospholipid metabolism; phosphatidylethanolamine biosynthesis; phosphatidylethanolamine from CDP-diacylglycerol: step 2/2. Catalyzes the formation of phosphatidylethanolamine (PtdEtn) from phosphatidylserine (PtdSer). The protein is Phosphatidylserine decarboxylase proenzyme of Stutzerimonas stutzeri (strain A1501) (Pseudomonas stutzeri).